The sequence spans 210 residues: Claudin-4 (210 aa).

At 1–7 (MASMGLQ) the chain is on the cytoplasmic side. The tract at residues 1–103 (MASMGLQVMG…GVLLSVVGGK (103 aa)) is interaction with EPHA2. Residues 8 to 28 (VMGIALAVLGWLGAILSCALP) traverse the membrane as a helical segment. The Extracellular portion of the chain corresponds to 29 to 81 (MWRVTAFIGSNIVTSQTIWEGLWMNCVVQSTGQMQCKVYDSLLALPQDLQAAR). Cys-54 and Cys-64 are disulfide-bonded. Residues 82-102 (ALMVVSIILAALGVLLSVVGG) traverse the membrane as a helical segment. Residues 103-117 (KCTNCVEDESAKAKT) lie on the Cytoplasmic side of the membrane. The chain crosses the membrane as a helical span at residues 118-138 (MIVAGVVFLLAGLLVMVPASW). Over 139 to 160 (TANNIIRDFYNPLVVSGQKREM) the chain is Extracellular. Residues 161 to 181 (GASLYVGWAASGLLLLGGALL) traverse the membrane as a helical segment. Residues 182-210 (CCNCPPRADKPYSAKYSAAARSAPASNYV) lie on the Cytoplasmic side of the membrane. Tyr-209 bears the Phosphotyrosine mark. The tract at residues 209-210 (YV) is interactions with TJP1, TJP2 and TJP3.

Belongs to the claudin family. In terms of assembly, can form heteropolymeric strands with other claudins. Interacts with CLDN8. Interacts with CLDN1. Directly interacts with TJP1/ZO-1. Interacts with TJP2/ZO-2 and TJP3/ZO-3. Interacts with EPHA2; phosphorylates CLDN4 and may regulate tight junctions. Post-translationally, phosphorylated. Phosphorylation by EPHA2 is stimulated by EFNA1 and alters interaction with TJP1.

Its subcellular location is the cell junction. It is found in the tight junction. The protein resides in the cell membrane. The catalysed reaction is chloride(in) = chloride(out). It carries out the reaction bromide(in) = bromide(out). It catalyses the reaction iodide(out) = iodide(in). The enzyme catalyses fluoride(in) = fluoride(out). In terms of biological role, can associate with other claudins to regulate tight junction structural and functional strand dynamics. May coassemble with CLDN8 into tight junction strands containing anion-selective channels that convey paracellular chloride permeability in renal collecting ducts. May integrate into CLDN3 strands to modulate localized tight junction barrier properties. May disrupt strand assembly of channel-forming CLDN2 and CLDN15 and inhibit cation conductance. Cannot form tight junction strands on its own. This Canis lupus familiaris (Dog) protein is Claudin-4 (CLDN4).